The chain runs to 203 residues: Secreted phosphoprotein 24 (203 aa).

The N-terminal stretch at 1–23 (MEKMAMKMLVIFVLGMNHWTCTG) is a signal peptide. 2 disulfides stabilise this stretch: Cys-86–Cys-97 and Cys-110–Cys-128. Ser-90 is modified (phosphoserine). 4 positions are modified to phosphoserine: Ser-138, Ser-139, Ser-166, and Ser-175.

Belongs to the SPP2 family. Post-translationally, multiply phosphorylated at serine residues in Ser-X-Glu/Ser(P) sequences, a recognition motif for phosphorylation by secretory pathway protein kinase. In terms of processing, phosphorylation sites are present in the extracellular medium. As to expression, in liver and bone but not in heart, lung, kidney, or spleen.

Its subcellular location is the secreted. Could coordinate an aspect of bone turnover. This is Secreted phosphoprotein 24 (SPP2) from Bos taurus (Bovine).